Consider the following 187-residue polypeptide: Large ribosomal subunit protein uL5 (187 aa).

This sequence belongs to the universal ribosomal protein uL5 family. Part of the 50S ribosomal subunit; part of the 5S rRNA/L5/L18/L25 subcomplex. Contacts the 5S rRNA and the P site tRNA. Forms a bridge to the 30S subunit in the 70S ribosome.

This is one of the proteins that bind and probably mediate the attachment of the 5S RNA into the large ribosomal subunit, where it forms part of the central protuberance. In the 70S ribosome it contacts protein S13 of the 30S subunit (bridge B1b), connecting the 2 subunits; this bridge is implicated in subunit movement. Contacts the P site tRNA; the 5S rRNA and some of its associated proteins might help stabilize positioning of ribosome-bound tRNAs. The sequence is that of Large ribosomal subunit protein uL5 from Mycobacteroides abscessus (strain ATCC 19977 / DSM 44196 / CCUG 20993 / CIP 104536 / JCM 13569 / NCTC 13031 / TMC 1543 / L948) (Mycobacterium abscessus).